Consider the following 495-residue polypeptide: Potassium voltage-gated channel subfamily A member 1 (495 aa).

Residues 1–30 (MTVMSGENADEASTAPGHPQDGSYPRQADH) are disordered. The tetramerization domain stretch occupies residues 1-128 (MTVMSGENAD…FYELGEEAME (128 aa)). The Cytoplasmic segment spans residues 1 to 164 (MTVMSGENAD…LLFEYPESSG (164 aa)). At serine 23 the chain carries Phosphoserine. A helical transmembrane segment spans residues 165–186 (PARVIAIVSVMVILISIVIFCL). The Extracellular portion of the chain corresponds to 187–220 (ETLPELKDDKDFTGTIHRIDNTTVIYTSNIFTDP). Asparagine 207 is a glycosylation site (N-linked (GlcNAc...) asparagine). A helical membrane pass occupies residues 221–242 (FFIVETLCIIWFSFELVVRFFA). A lipid anchor (S-palmitoyl cysteine) is attached at cysteine 243. The Cytoplasmic portion of the chain corresponds to 243–253 (CPSKTDFFKNI). A helical membrane pass occupies residues 254 to 274 (MNFIDIVAIIPYFITLGTEIA). The Extracellular portion of the chain corresponds to 275 to 287 (EQEGNQKGEQATS). The helical; Voltage-sensor transmembrane segment at 288-308 (LAILRVIRLVRVFRIFKLSRH) threads the bilayer. Residues 309-323 (SKGLQILGQTLKASM) lie on the Cytoplasmic side of the membrane. The S4-S5 linker stretch occupies residues 310-323 (KGLQILGQTLKASM). Residue serine 322 is modified to Phosphoserine; by PKA. Residues 324 to 345 (RELGLLIFFLFIGVILFSSAVY) form a helical membrane-spanning segment. Residues 346 to 359 (FAEAEEAESHFSSI) lie on the Extracellular side of the membrane. An intramembrane region (helical) is located at residues 360–371 (PDAFWWAVVSMT). A Selectivity filter motif is present at residues 372-377 (TVGYGD). An intramembrane segment occupies 372–379 (TVGYGDMY). The Extracellular portion of the chain corresponds to 380–386 (PVTIGGK). The helical transmembrane segment at 387–415 (IVGSLCAIAGVLTIALPVPVIVSNFNYFY) threads the bilayer. The Cytoplasmic segment spans residues 416–495 (HRETEGEEQA…VNKSKLLTDV (80 aa)). Residues serine 437 and serine 439 each carry the phosphoserine modification. Serine 446 carries the phosphoserine; by PKA modification. Positions 493–495 (TDV) match the PDZ-binding motif.

It belongs to the potassium channel family. A (Shaker) (TC 1.A.1.2) subfamily. Kv1.1/KCNA1 sub-subfamily. In terms of assembly, homotetramer and heterotetramer with other channel-forming alpha subunits, such as KCNA2, KCNA4, KCNA5, KCNA6 and KCNA7. Channel activity is regulated by interaction with the beta subunits KCNAB1 and KCNAB2. Identified in a complex with KCNA2 and KCNAB2. Interacts (via C-terminus) with the PDZ domains of DLG1, DLG2 and DLG4. Interacts with LGI1 within a complex containing LGI1, KCNA4 and KCNAB1. Interacts (via N-terminus) with STX1A; this promotes channel inactivation. Interacts (via N-terminus) with the heterodimer formed by GNB1 and GNG2; this promotes channel inactivation. Can interact simultaneously with STX1A and the heterodimer formed by GNB1 and GNG2. Interacts (via cytoplasmic N-terminal domain) with KCNRG; this inhibits channel activity. Interacts with ANK3; this inhibits channel activity. Interacts with ADAM11. N-glycosylated. Post-translationally, palmitoylated on Cys-243; which may be required for membrane targeting. In terms of processing, phosphorylated on tyrosine residues. Phosphorylation increases in response to NRG1; this inhibits channel activity. Phosphorylation at Ser-446 regulates channel activity by down-regulating expression at the cell membrane. As to expression, detected in brain. Expressed in cerebellar cortex basket cell terminals, the area surround the Purkinje cell soma, and the pinceaux expansions encircling the axon initial segment (at protein level). Detected in the juxtaparanodal regions of the nodes of Ranvier in myelinated axons. Detected in the paranodal region in sciatic nerve. Detected on cell bodies in cerebellum, dorsal and ventral cochlear nucleus, pontine reticular nucleus, mesencephalic trigeminal nucleus, motor trigeminal nucleus and the pricipal sensory trigeminal nucleus. Detected in terminal fields of basket cells in the cerebellum corpus medullare. Detected in hippocampus CA3 pyramidal neurons and in the hilus and stratum moleculare of the dentate gyrus. Detected in the central nucleus and the external nucleus of the inferior colliculus. Detected in fiber tracts in the optic tract, external medullary lamina, stria terminalis, medulla, ventral pallidum and substantia nigra. Detected in neurons from dorsal root ganglion. Detected in neurons in the medial nucleus of the trapezoid body. Detected in midbrain dopamine neuron axon terminals. Detected in brain cortex. Detected in brainstem. Detected in juxtaparanodal regions of the nodes of Ranvier in the vagus nerve, but only at very low levels in the heart. Detected in the islet of Langerhans. Detected at the luminal membrane in distal convoluted tubules in the kidney (at protein level). Detected in hippocampus, thalamus, neocortex and ventral brain cortex, including the piriform and entorhinal cortex and the amygdala. Detected in midbrain dopamine neurons. Detected in heart atrium, ventricle, sinoatrial node and atrioventricular node.

The protein resides in the cell membrane. Its subcellular location is the cell projection. It is found in the axon. It localises to the membrane. The protein localises to the perikaryon. The protein resides in the dendrite. Its subcellular location is the cell junction. It is found in the synapse. It localises to the cytoplasmic vesicle. The protein localises to the endoplasmic reticulum. The protein resides in the presynaptic cell membrane. Its subcellular location is the presynapse. It catalyses the reaction K(+)(in) = K(+)(out). With respect to regulation, inhibited by 4-aminopyridine (4-AP), tetraethylammonium (TEA) and dendrotoxin (DTX), but not by charybdotoxin (CTX). Its function is as follows. Voltage-gated potassium channel that mediates transmembrane potassium transport in excitable membranes, primarily in the brain and the central nervous system, but also in the kidney. Contributes to the regulation of the membrane potential and nerve signaling, and prevents neuronal hyperexcitability. Forms tetrameric potassium-selective channels through which potassium ions pass in accordance with their electrochemical gradient. The channel alternates between opened and closed conformations in response to the voltage difference across the membrane. Can form functional homotetrameric channels and heterotetrameric channels that contain variable proportions of KCNA1, KCNA2, KCNA4, KCNA5, KCNA6, KCNA7, and possibly other family members as well; channel properties depend on the type of alpha subunits that are part of the channel. Channel properties are modulated by cytoplasmic beta subunits that regulate the subcellular location of the alpha subunits and promote rapid inactivation of delayed rectifier potassium channels. In vivo, membranes probably contain a mixture of heteromeric potassium channel complexes, making it difficult to assign currents observed in intact tissues to any particular potassium channel family member. Homotetrameric KCNA1 forms a delayed-rectifier potassium channel that opens in response to membrane depolarization, followed by slow spontaneous channel closure. In contrast, a heterotetrameric channel formed by KCNA1 and KCNA4 shows rapid inactivation. Regulates neuronal excitability in hippocampus, especially in mossy fibers and medial perforant path axons, preventing neuronal hyperexcitability. May function as down-stream effector for G protein-coupled receptors and inhibit GABAergic inputs to basolateral amygdala neurons. May contribute to the regulation of neurotransmitter release, such as gamma-aminobutyric acid (GABA) release. Plays a role in regulating the generation of action potentials and preventing hyperexcitability in myelinated axons of the vagus nerve, and thereby contributes to the regulation of heart contraction. Required for normal neuromuscular responses. Regulates the frequency of neuronal action potential firing in response to mechanical stimuli, and plays a role in the perception of pain caused by mechanical stimuli, but does not play a role in the perception of pain due to heat stimuli. Required for normal responses to auditory stimuli and precise location of sound sources, but not for sound perception. The use of toxins that block specific channels suggest that it contributes to the regulation of the axonal release of the neurotransmitter dopamine. Required for normal postnatal brain development and normal proliferation of neuronal precursor cells in the brain. Plays a role in the reabsorption of Mg(2+) in the distal convoluted tubules in the kidney and in magnesium ion homeostasis, probably via its effect on the membrane potential. This is Potassium voltage-gated channel subfamily A member 1 from Mus musculus (Mouse).